The chain runs to 403 residues: Phosphopentomutase (403 aa).

Mn(2+) contacts are provided by D13, D298, H303, D339, H340, and H351.

This sequence belongs to the phosphopentomutase family. It depends on Mn(2+) as a cofactor.

Its subcellular location is the cytoplasm. The catalysed reaction is 2-deoxy-alpha-D-ribose 1-phosphate = 2-deoxy-D-ribose 5-phosphate. It carries out the reaction alpha-D-ribose 1-phosphate = D-ribose 5-phosphate. It participates in carbohydrate degradation; 2-deoxy-D-ribose 1-phosphate degradation; D-glyceraldehyde 3-phosphate and acetaldehyde from 2-deoxy-alpha-D-ribose 1-phosphate: step 1/2. Its function is as follows. Isomerase that catalyzes the conversion of deoxy-ribose 1-phosphate (dRib-1-P) and ribose 1-phosphate (Rib-1-P) to deoxy-ribose 5-phosphate (dRib-5-P) and ribose 5-phosphate (Rib-5-P), respectively. The sequence is that of Phosphopentomutase from Streptococcus thermophilus.